Here is a 522-residue protein sequence, read N- to C-terminus: tRNA-2-methylthio-N(6)-dimethylallyladenosine synthase (522 aa).

Low complexity predominate over residues 1-26 (MSLTIPSPASGTSTSATTDTAPAAAP). Positions 1–27 (MSLTIPSPASGTSTSATTDTAPAAAPQ) are disordered. One can recognise an MTTase N-terminal domain in the interval 28 to 143 (RTYQVRTFGC…LPALLDRARH (116 aa)). Cysteine 37, cysteine 72, cysteine 106, cysteine 180, cysteine 184, and cysteine 187 together coordinate [4Fe-4S] cluster. Positions 166-396 (RDSVYSGWVS…TALQDRIAAE (231 aa)) constitute a Radical SAM core domain. In terms of domain architecture, TRAM spans 399–469 (ARQLGRRVEV…AFHLVADPAS (71 aa)). Residues 481-522 (GDAWDRSQADSCGAPVAGGGAGSNGGKGGVSLGMPALPVRRS) form a disordered region. Over residues 496-511 (VAGGGAGSNGGKGGVS) the composition is skewed to gly residues.

This sequence belongs to the methylthiotransferase family. MiaB subfamily. As to quaternary structure, monomer. Requires [4Fe-4S] cluster as cofactor.

The protein resides in the cytoplasm. It catalyses the reaction N(6)-dimethylallyladenosine(37) in tRNA + (sulfur carrier)-SH + AH2 + 2 S-adenosyl-L-methionine = 2-methylsulfanyl-N(6)-dimethylallyladenosine(37) in tRNA + (sulfur carrier)-H + 5'-deoxyadenosine + L-methionine + A + S-adenosyl-L-homocysteine + 2 H(+). Catalyzes the methylthiolation of N6-(dimethylallyl)adenosine (i(6)A), leading to the formation of 2-methylthio-N6-(dimethylallyl)adenosine (ms(2)i(6)A) at position 37 in tRNAs that read codons beginning with uridine. The sequence is that of tRNA-2-methylthio-N(6)-dimethylallyladenosine synthase from Arthrobacter sp. (strain FB24).